Consider the following 281-residue polypeptide: MLGQQQQQQLYSSAALLTGERSRLLSCYVQDYLECVESLPHDMQRNVSVLRELDNKYQETLKEIDDVYEKYKKEDDSNQKKRLQQHLQRALINSQELGDEKIQIVTQMLELVENRARQMELHSQCFQDPAESERASDKSKMDSSQPERSSRRPRRQRTSESRDLCHMTNGIDDCDDQPPKEKRSKSAKKKKRSKAKQEREASPVEFAIDPNEPTYCLCNQVSYGEMIGCDNEQCPIEWFHFSCVSLTYKPKGKWYCPKCRGDNEKTMDKSTEKTKKERRAR.

Positions 49-101 (VLRELDNKYQETLKEIDDVYEKYKKEDDSNQKKRLQQHLQRALINSQELGDEK) form a coiled coil. Residues 123–204 (SQCFQDPAES…AKQEREASPV (82 aa)) are disordered. Basic and acidic residues predominate over residues 131-141 (ESERASDKSKM). Basic residues predominate over residues 182-194 (KRSKSAKKKKRSK). A Glycyl lysine isopeptide (Lys-Gly) (interchain with G-Cter in SUMO1) cross-link involves residue K196. The PHD-type zinc finger occupies 213 to 262 (PTYCLCNQVSYGEMIGCDNEQCPIEWFHFSCVSLTYKPKGKWYCPKCRGD). C216, C218, C229, C234, H240, C243, C256, and C259 together coordinate Zn(2+). Basic and acidic residues predominate over residues 261 to 275 (GDNEKTMDKSTEKTK). The disordered stretch occupies residues 261 to 281 (GDNEKTMDKSTEKTKKERRAR). Residues 265 to 281 (KTMDKSTEKTKKERRAR) are PBR.

It belongs to the ING family. In terms of assembly, interacts with H3K4me3 and to a lesser extent with H3K4me2. Component of a mSin3A-like complex at least consisting of SIN3A, HDAC1, HDAC2, RBBP4/RbAp48, RBBP7/RbAp46, SAP30 and ING2. Sumoylation enhances its association with SIN3A and is required for binding to some target gene promoters, this is the case for TMEM71.

It is found in the nucleus. Its function is as follows. Seems to be involved in p53/TP53 activation and p53/TP53-dependent apoptotic pathways, probably by enhancing acetylation of p53/TP53. Component of a mSin3A-like corepressor complex, which is probably involved in deacetylation of nucleosomal histones. ING2 activity seems to be modulated by binding to phosphoinositides (PtdInsPs). The protein is Inhibitor of growth protein 2 (Ing2) of Mus musculus (Mouse).